The sequence spans 428 residues: MAKEKPHVNIVFIGHVDHGKSTTIGRLLFDTANIPENIIKKFEEMGEKGKSFKFAWVMDRLKEERERGITIDVAHTKFETPHRYITIIDAPGHRDFVKNMITGASQADAAVLVVAATDGVMPQTKEHAFLARTLGINHIIVAINKMDMVNYDQKVFEKVKAQVEKLLKMLGYKDFPVIPISAWEGDNVVKKSDKMPWYKGPTLIEALDQIPEPPKPIDKPLRIPIQDVYSIKGVGTVPVGRVETGVLRVGDVVIFEPASTIFHKPIQGEVKSIEMHHEPLQEAYPGDNIGFNVRGVGKNDIKRGDVAGHTTNPPTVVRPKDTFKAQIIVLNHPTAITVGYTPVLHAHTTQVAVRFEQLLAKLDPRTGNIVEENPQFIKTGDSAIVILRPTKAMVIEPVKEIPQMGRFAIRDMGQTVAAGMVISIQKAE.

Residues 5–215 form the tr-type G domain; it reads KPHVNIVFIG…ALDQIPEPPK (211 aa). The interval 14–21 is G1; that stretch reads GHVDHGKS. 14–21 contributes to the GTP binding site; the sequence is GHVDHGKS. Residue serine 21 participates in Mg(2+) binding. A G2 region spans residues 68–72; that stretch reads GITID. The tract at residues 89–92 is G3; that stretch reads DAPG. GTP is bound by residues 89 to 93 and 144 to 147; these read DAPGH and NKMD. Residues 144–147 form a G4 region; the sequence is NKMD. The tract at residues 181–183 is G5; it reads SAW.

Belongs to the TRAFAC class translation factor GTPase superfamily. Classic translation factor GTPase family. EF-Tu/EF-1A subfamily.

The protein localises to the cytoplasm. It catalyses the reaction GTP + H2O = GDP + phosphate + H(+). GTP hydrolase that promotes the GTP-dependent binding of aminoacyl-tRNA to the A-site of ribosomes during protein biosynthesis. The polypeptide is Elongation factor 1-alpha (Thermococcus gammatolerans (strain DSM 15229 / JCM 11827 / EJ3)).